Here is a 365-residue protein sequence, read N- to C-terminus: MATGGGGGGGGMGGGGVGGGAGAAGVGVGGRMPTWRERENNKRRERRRRAIAAKIFAGLRAHGGYKLPKHCDNNEVLKALCNEAGWVVEPDGTTYRKGYKPPERMEVIGCSVSPSPCSSYQPSPRASYNASPTSSSFPSGASSPFLPHPNNMANGVDGNPILPWLKTLSNSPSSKKHPQLPPLLIHGGSISAPVTPPLSSPTARTPRMKTDWDESNVQPTWTGSNSPCVVNSTPPSPGRTMLPDPAWLAGIQISSTSPSSPTFSLVSSNPFSVFKDAILVGNNSSRMCTPGQSGTCSPAIPGMAPHPDIHMMDAVSDEFAFGSSTNGGHQAAGLVRAWEGERIHEDSGSDDLELTLGSSRTRAAA.

Residues 1–30 are compositionally biased toward gly residues; it reads MATGGGGGGGGMGGGGVGGGAGAAGVGVGG. Disordered regions lie at residues 1 to 45, 113 to 154, 191 to 236, and 344 to 365; these read MATG…KRRE, SPSP…NMAN, SAPV…TPPS, and HEDS…RAAA. Residues 31–113 form a required for DNA-binding region; the sequence is RMPTWREREN…RMEVIGCSVS (83 aa). Low complexity predominate over residues 113-144; that stretch reads SPSPCSSYQPSPRASYNASPTSSSFPSGASSP. Composition is skewed to polar residues over residues 215 to 233 and 356 to 365; these read SNVQ…VNST and LGSSRTRAAA.

The protein belongs to the BZR/LAT61 family. Interacts with PUB24.

In terms of biological role, may function in brassinosteroid signaling. The protein is Protein BZR1 homolog 2 of Oryza sativa subsp. japonica (Rice).